We begin with the raw amino-acid sequence, 359 residues long: Cell division protein ZipA (359 aa).

Residues 1–4 are Periplasmic-facing; sequence MDLN. The chain crosses the membrane as a helical span at residues 5 to 25; the sequence is TILIILGILALVALVAHGLWS. The Cytoplasmic segment spans residues 26–359; it reads NRREKSQYFE…AEEEYLAKIK (334 aa). The segment at 78–101 is disordered; the sequence is PPVQQPLNTEPEPITQETPVRAEP.

Belongs to the ZipA family. As to quaternary structure, interacts with FtsZ via their C-terminal domains.

It localises to the cell inner membrane. Its function is as follows. Essential cell division protein that stabilizes the FtsZ protofilaments by cross-linking them and that serves as a cytoplasmic membrane anchor for the Z ring. Also required for the recruitment to the septal ring of downstream cell division proteins. This Mannheimia succiniciproducens (strain KCTC 0769BP / MBEL55E) protein is Cell division protein ZipA.